The sequence spans 44 residues: pyr operon leader peptide (44 aa).

In Escherichia coli O157:H7, this protein is pyr operon leader peptide (pyrL).